Consider the following 501-residue polypeptide: Dipeptide and tripeptide permease B (501 aa).

Topologically, residues 1–27 are cytoplasmic; that stretch reads MRPSAPTGLLQQPKPFFMIFFVELWER. Residues 28–48 traverse the membrane as a helical segment; sequence FGYYGVQGILAVFFVQQLGFS. Residues 49 to 52 are Periplasmic-facing; sequence QEQS. Residues 53–73 form a helical membrane-spanning segment; the sequence is FITFGAFSALVYGLISVGGYV. Residues 74 to 82 are Cytoplasmic-facing; the sequence is GDHVLGTKR. Residues 83 to 103 traverse the membrane as a helical segment; it reads TMVLGAIVLVIGYFMTGMSIY. Over 104 to 106 the chain is Periplasmic; sequence NPD. Residues 107-127 form a helical membrane-spanning segment; that stretch reads LIFYALGTIAVGNCLFKANPA. The Cytoplasmic portion of the chain corresponds to 128–146; that stretch reads SLLAKCYERGDPRLDGAFT. The helical transmembrane segment at 147–167 threads the bilayer; the sequence is LFYMSINIGSLISLSLAPVIA. The Periplasmic segment spans residues 168–172; that stretch reads DHYGY. A helical membrane pass occupies residues 173–193; the sequence is TVTYNLCGVGLVIALLTFFAC. At 194–211 the chain is on the cytoplasmic side; that stretch reads RHMVRDIGSEPDHLPLDY. The chain crosses the membrane as a helical span at residues 212–232; sequence GKLLLVLLGSVALVFFCAWLM. A topological domain (periplasmic) is located at residue histidine 233. Residues 234–254 traverse the membrane as a helical segment; sequence HVVIANMVLMTVTLAVVIFFF. The Cytoplasmic portion of the chain corresponds to 255–267; that stretch reads REAFKLDAVARNK. Residues 268 to 288 traverse the membrane as a helical segment; sequence MYVAFVLMLEAVVFYVLYAQM. The Periplasmic portion of the chain corresponds to 289–311; that stretch reads PTSLNFFAINNMHHEMLGMSVNP. Residues 312–332 traverse the membrane as a helical segment; it reads ISFQALNPFWVVVGSPVLAMI. The Cytoplasmic portion of the chain corresponds to 333–350; it reads YTRLGSKGRDLTMPLKFT. Residues 351–371 form a helical membrane-spanning segment; sequence LGMLFCSLGFLTAAASGIWFA. Topologically, residues 372-380 are periplasmic; the sequence is DAQGLTSPW. Residues 381–401 form a helical membrane-spanning segment; it reads FMVLIYLFQSLGELMISALGL. Residues 402–411 lie on the Cytoplasmic side of the membrane; sequence AMVAALVPQR. Residues 412-432 traverse the membrane as a helical segment; sequence LMGFILGMWFLTQAMASLLGG. Topologically, residues 433-456 are periplasmic; the sequence is YVATFTAVPQGVTDPLQTLPIYTD. A helical membrane pass occupies residues 457–477; sequence VFGKIGLVTLLVAVVMALMVP. The Cytoplasmic portion of the chain corresponds to 478–501; it reads WLNRMMHAGQGEEGEDLLSQQAKA.

It belongs to the major facilitator superfamily. Proton-dependent oligopeptide transporter (POT/PTR) (TC 2.A.17) family. DtpB subfamily.

The protein resides in the cell inner membrane. Functionally, proton-dependent permease that transports di- and tripeptides. This Aeromonas hydrophila subsp. hydrophila (strain ATCC 7966 / DSM 30187 / BCRC 13018 / CCUG 14551 / JCM 1027 / KCTC 2358 / NCIMB 9240 / NCTC 8049) protein is Dipeptide and tripeptide permease B.